The sequence spans 480 residues: DnaJ homolog subfamily A member 3, mitochondrial (480 aa).

Arginine 58 bears the Omega-N-methylarginine; by CARM1 mark. The J domain maps to 93–158 (DYYQILGVPR…VKRKQYDAYG (66 aa)). The residue at position 134 (lysine 134) is an N6-acetyllysine. The CR-type zinc finger occupies 223–301 (GVNKEFTVNI…CRGAGQAKQK (79 aa)). Position 236 (cysteine 236) interacts with Zn(2+). CXXCXGXG motif repeat units lie at residues 236 to 243 (CERCDGKG), 253 to 260 (CHYCGGSG), 275 to 282 (CRRCGGRG), and 289 to 296 (CVVCRGAG). Arginine 238 carries the post-translational modification Omega-N-methylarginine; by CARM1. Zn(2+)-binding residues include cysteine 239, cysteine 253, cysteine 256, cysteine 275, cysteine 278, cysteine 289, and cysteine 292. Residue arginine 293 is modified to Omega-N-methylarginine; by CARM1. Serine 398 bears the Phosphoserine mark. The segment at 437–468 (TVNGVTHTSTGGRTMDSSAGSKDRREAGEDNE) is disordered. Over residues 439–456 (NGVTHTSTGGRTMDSSAG) the composition is skewed to polar residues.

In terms of assembly, interacts with JAK2, HSPA9B and IFN-gammaR2 chain. Interacts with Ras GTPase-activating protein 1 (RASA1). Isoform 2 interacts with MUSK (via the cytoplasmic domain). In terms of processing, tyrosine phosphorylated.

Its subcellular location is the mitochondrion matrix. It is found in the cytoplasm. The protein resides in the cytosol. The protein localises to the postsynaptic cell membrane. Its function is as follows. Modulates apoptotic signal transduction or effector structures within the mitochondrial matrix. Affect cytochrome C release from the mitochondria and caspase 3 activation, but not caspase 8 activation. Isoform 1 increases apoptosis triggered by both TNF and the DNA-damaging agent mytomycin C; in sharp contrast, isoform 2 suppresses apoptosis. Can modulate IFN-gamma-mediated transcriptional activity. Isoform 2 may play a role in neuromuscular junction development as an effector of the MUSK signaling pathway. The chain is DnaJ homolog subfamily A member 3, mitochondrial (Dnaja3) from Mus musculus (Mouse).